We begin with the raw amino-acid sequence, 252 residues long: 2-succinyl-6-hydroxy-2,4-cyclohexadiene-1-carboxylate synthase (252 aa).

It belongs to the AB hydrolase superfamily. MenH family. In terms of assembly, monomer.

The enzyme catalyses 5-enolpyruvoyl-6-hydroxy-2-succinyl-cyclohex-3-ene-1-carboxylate = (1R,6R)-6-hydroxy-2-succinyl-cyclohexa-2,4-diene-1-carboxylate + pyruvate. It participates in quinol/quinone metabolism; 1,4-dihydroxy-2-naphthoate biosynthesis; 1,4-dihydroxy-2-naphthoate from chorismate: step 3/7. The protein operates within quinol/quinone metabolism; menaquinone biosynthesis. Its function is as follows. Catalyzes a proton abstraction reaction that results in 2,5-elimination of pyruvate from 2-succinyl-5-enolpyruvyl-6-hydroxy-3-cyclohexene-1-carboxylate (SEPHCHC) and the formation of 2-succinyl-6-hydroxy-2,4-cyclohexadiene-1-carboxylate (SHCHC). In Escherichia fergusonii (strain ATCC 35469 / DSM 13698 / CCUG 18766 / IAM 14443 / JCM 21226 / LMG 7866 / NBRC 102419 / NCTC 12128 / CDC 0568-73), this protein is 2-succinyl-6-hydroxy-2,4-cyclohexadiene-1-carboxylate synthase.